We begin with the raw amino-acid sequence, 71 residues long: UPF0346 protein SUB0487 (71 aa).

The protein belongs to the UPF0346 family.

This chain is UPF0346 protein SUB0487, found in Streptococcus uberis (strain ATCC BAA-854 / 0140J).